The following is a 276-amino-acid chain: NH(3)-dependent NAD(+) synthetase (276 aa).

43-50 (GISGGVDS) contacts ATP. A Mg(2+)-binding site is contributed by Asp-49. Residue Arg-146 coordinates deamido-NAD(+). An ATP-binding site is contributed by Thr-166. Glu-171 serves as a coordination point for Mg(2+). Positions 179 and 186 each coordinate deamido-NAD(+). Residues Lys-195 and Thr-217 each contribute to the ATP site. 266–267 (HK) contacts deamido-NAD(+).

This sequence belongs to the NAD synthetase family. In terms of assembly, homodimer.

It catalyses the reaction deamido-NAD(+) + NH4(+) + ATP = AMP + diphosphate + NAD(+) + H(+). It functions in the pathway cofactor biosynthesis; NAD(+) biosynthesis; NAD(+) from deamido-NAD(+) (ammonia route): step 1/1. In terms of biological role, catalyzes the ATP-dependent amidation of deamido-NAD to form NAD. Uses ammonia as a nitrogen source. This Shewanella amazonensis (strain ATCC BAA-1098 / SB2B) protein is NH(3)-dependent NAD(+) synthetase.